Here is a 549-residue protein sequence, read N- to C-terminus: MKPYLAQARSWASLLQHYGCIKKQHMRDLFAADPQRFDKFSLIFNGILFDFSKNRITEETLKLLLDLARERELQQGISRMFAGEPINNTENRPVLHVALRNRANRPIMVKGKDVMPQVNVVLERMGKFCDRVHRGQWRGFSGERLTDIVNIGIGGSDLGPAMVTEALQPYAKSGFRVHFVSNIDGTQLAETLKTIRPETALFVISSKTFTTQETLTNAHSARNWFLRAAPDDKAIAKHFIAVSTNRSEVEKFGIDPCNMFEFWDWVGGRYSLWSAIGLSIALYLGMENFEQLLEGAHEMDKHFQETPLKQNIPVIAALVGIWNINFLGAQSHAVLPYDQYLERFPAYLQQLEMESNGKHVTRGGASVNYATGNVIWGAPGTNGQHAFFQLLHQGTPLITADFLASAESHNPLGEHHQILLSNFFAQTEALMKGKDEAEVRAELEEANLAKGEVEALIPHKLFDGNRPSNSFLFSKLTPWTLGALIAFYEHKVFTQGLIWDINSFDQWGVELGKQLATTILPELQGGEEVNSHDSSTNGLINYYKRIRHL.

Residue Glu354 is the Proton donor of the active site. Catalysis depends on residues His385 and Lys513.

This sequence belongs to the GPI family.

The protein resides in the cytoplasm. It carries out the reaction alpha-D-glucose 6-phosphate = beta-D-fructose 6-phosphate. It functions in the pathway carbohydrate biosynthesis; gluconeogenesis. It participates in carbohydrate degradation; glycolysis; D-glyceraldehyde 3-phosphate and glycerone phosphate from D-glucose: step 2/4. In terms of biological role, catalyzes the reversible isomerization of glucose-6-phosphate to fructose-6-phosphate. In Nitrosococcus oceani (strain ATCC 19707 / BCRC 17464 / JCM 30415 / NCIMB 11848 / C-107), this protein is Glucose-6-phosphate isomerase.